Reading from the N-terminus, the 426-residue chain is MALDILAMAPLYQAPAITRIGPKTDPSKRPADPLKPLVPSRTKLTTIEAKRIMSILDEAINKVELVTLLSYVASNREDVEGVLGEDIMRAVREHEEEAEEEGWLRDRLLSIELQKSSLSPLTQQIKDSTKNVLRLLLSNPQAARLLQMQTQSRSAEAQNFIDSLIELRGFLFEKLVTSPMEARDKAQFIQDINRQNSNNQQIIDTLENELAERMKKRNAEVEKENFVIQELKNHLHQVLKFSENSLLRTKQEAEKQQKADFRASQARVAKIQQEILQLQSQFYNLVMENREAEQALRKKKYKVETEIENWIQKYDTEMGEKQEELEDLEAVHKEEKIALEELKRRHKVLVEEFVQIREEREINSKKRMEAEQEMVRMVRAATLIQAFWKGYLVRSLLRSKKKRGKGKAKGKEKGKQKGKEKGKGKK.

Disordered regions lie at residues 18–37 and 399–426; these read TRIG…LKPL and SKKK…KGKK. The IQ domain occupies 377 to 406; sequence MVRAATLIQAFWKGYLVRSLLRSKKKRGKG. Positions 399 to 408 are enriched in basic residues; it reads SKKKRGKGKA. Residues 409–426 show a composition bias toward basic and acidic residues; that stretch reads KGKEKGKQKGKEKGKGKK.

The protein belongs to the DRC10 family. Component of the nexin-dynein regulatory complex (N-DRC). Interacts with CFAP52.

The protein localises to the cytoplasm. It is found in the cytoskeleton. The protein resides in the flagellum axoneme. In terms of biological role, component of the nexin-dynein regulatory complex (N-DRC), a key regulator of ciliary/flagellar motility which maintains the alignment and integrity of the distal axoneme and regulates microtubule sliding in motile axonemes. The chain is Dynein regulatory complex protein 10 (IQCD) from Macaca fascicularis (Crab-eating macaque).